A 473-amino-acid chain; its full sequence is Membrane-bound acylglycerophosphatidylinositol O-acyltransferase MBOAT7 (473 aa).

Over 1–5 (MTPEE) the chain is Cytoplasmic. Residues 6-22 (WTYLMVLLISIPVGFLF) form a helical membrane-spanning segment. Topologically, residues 23-33 (KKAGPGLKRWG) are lumenal. A helical membrane pass occupies residues 34–57 (AAAVGLGLTLFTCGPHSLHSLITI). Residues 58–73 (LGTWALIQAQPCSCHA) lie on the Cytoplasmic side of the membrane. Residues 74 to 93 (LALAWTFSYLLFFRALSLLG) traverse the membrane as a helical segment. The Lumenal segment spans residues 94–194 (LPTPTPFTNA…VPSLRPLLRR (101 aa)). A helical transmembrane segment spans residues 195–212 (AWPAPLFGLLFLLSSHLF). The Cytoplasmic segment spans residues 213–231 (PLEAVREDAFYARPLPTRL). Residues 232 to 261 (FYMIPVFFAFRMRFYVAWIAAECGCIAAGF) traverse the membrane as a helical segment. Residues 262-426 (GAYPVAAKAR…LSMADTLRYW (165 aa)) are Lumenal-facing. Asparagine 321 carries N-linked (GlcNAc...) asparagine glycosylation. The chain crosses the membrane as a helical span at residues 427–447 (ASIYFWVHFLALACLGLGLVL). Topologically, residues 448–473 (GGGSPSKRKTPSQATSSQAKEKLREE) are cytoplasmic. A disordered region spans residues 451-473 (SPSKRKTPSQATSSQAKEKLREE).

Belongs to the membrane-bound acyltransferase family. In terms of assembly, interacts with SPTSSA; the interaction facilitates MBOAT7 location to mitochondria-associated membranes (MAMs).

The protein resides in the endoplasmic reticulum membrane. It catalyses the reaction a 1-acyl-sn-glycero-3-phospho-(1D-myo-inositol) + an acyl-CoA = a 1,2-diacyl-sn-glycero-3-phospho-(1D-myo-inositol) + CoA. The enzyme catalyses 1-octadecanoyl-sn-glycero-3-phospho-(1D-myo-inositol) + (5Z,8Z,11Z,14Z)-eicosatetraenoyl-CoA = 1-octadecanoyl-2-(5Z,8Z,11Z,14Z-eicosatetraenoyl)-sn-glycero-3-phospho-(1D-myo-inositol) + CoA. It carries out the reaction a 1-acyl-sn-glycero-3-phospho-(1D-myo-inositol) + (5Z,8Z,11Z,14Z)-eicosatetraenoyl-CoA = a 1-acyl-2-(5Z,8Z,11Z,14Z-eicosatetraenoyl)-sn-glycero-3-phospho-(1D-myo-inositol) + CoA. The catalysed reaction is (5Z,8Z,11Z,14Z)-eicosatetraenoyl-CoA + 1-hexadecanoyl-sn-glycero-3-phosphocholine = 1-hexadecanoyl-2-(5Z,8Z,11Z,14Z-eicosatetraenoyl)-sn-glycero-3-phosphocholine + CoA. It functions in the pathway lipid metabolism; phospholipid metabolism. Its function is as follows. Acyltransferase which catalyzes the transfer of an acyl group from an acyl-CoA to a lysophosphatidylinositol (1-acylglycerophosphatidylinositol or LPI) leading to the production of a phosphatidylinositol (1,2-diacyl-sn-glycero-3-phosphoinositol or PI) and participates in the reacylation step of the phospholipid remodeling pathway also known as the Lands cycle. Prefers arachidonoyl-CoA as the acyl donor, thus contributing to the regulation of free levels arachidonic acid in cell. In liver, participates in the regulation of triglyceride metabolism through the phosphatidylinositol acyl-chain remodeling regulation. This Mus musculus (Mouse) protein is Membrane-bound acylglycerophosphatidylinositol O-acyltransferase MBOAT7.